The sequence spans 439 residues: uncharacterized protein (439 aa).

ATP is bound at residue 28-35 (GRRRIGKT).

This is an uncharacterized protein from Methanocaldococcus jannaschii (strain ATCC 43067 / DSM 2661 / JAL-1 / JCM 10045 / NBRC 100440) (Methanococcus jannaschii).